We begin with the raw amino-acid sequence, 113 residues long: Large ribosomal subunit protein uL22 (113 aa).

Belongs to the universal ribosomal protein uL22 family. In terms of assembly, part of the 50S ribosomal subunit.

This protein binds specifically to 23S rRNA; its binding is stimulated by other ribosomal proteins, e.g. L4, L17, and L20. It is important during the early stages of 50S assembly. It makes multiple contacts with different domains of the 23S rRNA in the assembled 50S subunit and ribosome. In terms of biological role, the globular domain of the protein is located near the polypeptide exit tunnel on the outside of the subunit, while an extended beta-hairpin is found that lines the wall of the exit tunnel in the center of the 70S ribosome. The polypeptide is Large ribosomal subunit protein uL22 (Carboxydothermus hydrogenoformans (strain ATCC BAA-161 / DSM 6008 / Z-2901)).